A 123-amino-acid polypeptide reads, in one-letter code: uncharacterized protein (123 aa).

The segment at 35-100 (SQDHGDDPAE…SSGAPASQHC (66 aa)) is disordered. Over residues 37 to 48 (DHGDDPAERGRT) the composition is skewed to basic and acidic residues. Positions 85 to 97 (ALPASPSSGAPAS) are enriched in low complexity.

This is an uncharacterized protein from Homo sapiens (Human).